The primary structure comprises 211 residues: Pyridoxine/pyridoxamine 5'-phosphate oxidase (211 aa).

Substrate contacts are provided by residues 7 to 10 and lysine 65; that span reads RTDY. FMN-binding positions include 60–65, 75–76, arginine 81, and lysine 82; these read RILLIK and FT. Residues tyrosine 122, arginine 126, and serine 130 each contribute to the substrate site. FMN-binding positions include 139–140 and tryptophan 183; that span reads QS. Residue 189–191 coordinates substrate; it reads RLH. Residue arginine 193 participates in FMN binding.

This sequence belongs to the pyridoxamine 5'-phosphate oxidase family. Homodimer. FMN is required as a cofactor.

The enzyme catalyses pyridoxamine 5'-phosphate + O2 + H2O = pyridoxal 5'-phosphate + H2O2 + NH4(+). It carries out the reaction pyridoxine 5'-phosphate + O2 = pyridoxal 5'-phosphate + H2O2. It participates in cofactor metabolism; pyridoxal 5'-phosphate salvage; pyridoxal 5'-phosphate from pyridoxamine 5'-phosphate: step 1/1. The protein operates within cofactor metabolism; pyridoxal 5'-phosphate salvage; pyridoxal 5'-phosphate from pyridoxine 5'-phosphate: step 1/1. Its function is as follows. Catalyzes the oxidation of either pyridoxine 5'-phosphate (PNP) or pyridoxamine 5'-phosphate (PMP) into pyridoxal 5'-phosphate (PLP). This Janthinobacterium sp. (strain Marseille) (Minibacterium massiliensis) protein is Pyridoxine/pyridoxamine 5'-phosphate oxidase.